The primary structure comprises 100 residues: Aspartyl/glutamyl-tRNA(Asn/Gln) amidotransferase subunit C (100 aa).

Belongs to the GatC family. In terms of assembly, heterotrimer of A, B and C subunits.

The catalysed reaction is L-glutamyl-tRNA(Gln) + L-glutamine + ATP + H2O = L-glutaminyl-tRNA(Gln) + L-glutamate + ADP + phosphate + H(+). It carries out the reaction L-aspartyl-tRNA(Asn) + L-glutamine + ATP + H2O = L-asparaginyl-tRNA(Asn) + L-glutamate + ADP + phosphate + 2 H(+). In terms of biological role, allows the formation of correctly charged Asn-tRNA(Asn) or Gln-tRNA(Gln) through the transamidation of misacylated Asp-tRNA(Asn) or Glu-tRNA(Gln) in organisms which lack either or both of asparaginyl-tRNA or glutaminyl-tRNA synthetases. The reaction takes place in the presence of glutamine and ATP through an activated phospho-Asp-tRNA(Asn) or phospho-Glu-tRNA(Gln). This Streptococcus agalactiae serotype Ia (strain ATCC 27591 / A909 / CDC SS700) protein is Aspartyl/glutamyl-tRNA(Asn/Gln) amidotransferase subunit C.